Here is a 179-residue protein sequence, read N- to C-terminus: UPF0200 protein TV0279 (179 aa).

6–13 (GMPGAGKD) provides a ligand contact to ATP.

Belongs to the UPF0200 family.

This chain is UPF0200 protein TV0279, found in Thermoplasma volcanium (strain ATCC 51530 / DSM 4299 / JCM 9571 / NBRC 15438 / GSS1).